The chain runs to 201 residues: Acireductone dioxygenase 2 (201 aa).

Fe(2+) contacts are provided by His-83, His-85, Glu-89, and His-129. Residues His-83, His-85, Glu-89, and His-129 each contribute to the Ni(2+) site.

The protein belongs to the acireductone dioxygenase (ARD) family. Fe(2+) serves as cofactor. The cofactor is Ni(2+).

The protein resides in the cytoplasm. The protein localises to the nucleus. The catalysed reaction is 1,2-dihydroxy-5-(methylsulfanyl)pent-1-en-3-one + O2 = 4-methylsulfanyl-2-oxobutanoate + formate + 2 H(+). It catalyses the reaction 1,2-dihydroxy-5-(methylsulfanyl)pent-1-en-3-one + O2 = 3-(methylsulfanyl)propanoate + CO + formate + 2 H(+). Its pathway is amino-acid biosynthesis; L-methionine biosynthesis via salvage pathway; L-methionine from S-methyl-5-thio-alpha-D-ribose 1-phosphate: step 5/6. Catalyzes 2 different reactions between oxygen and the acireductone 1,2-dihydroxy-3-keto-5-methylthiopentene (DHK-MTPene) depending upon the metal bound in the active site. Fe-containing acireductone dioxygenase (Fe-ARD) produces formate and 2-keto-4-methylthiobutyrate (KMTB), the alpha-ketoacid precursor of methionine in the methionine recycle pathway. Ni-containing acireductone dioxygenase (Ni-ARD) produces methylthiopropionate, carbon monoxide and formate, and does not lie on the methionine recycle pathway. This is Acireductone dioxygenase 2 from Coprinopsis cinerea (strain Okayama-7 / 130 / ATCC MYA-4618 / FGSC 9003) (Inky cap fungus).